The sequence spans 338 residues: Ornithine carbamoyltransferase, catabolic (338 aa).

Carbamoyl phosphate is bound by residues 58–61 (STRT), Q85, R109, and 136–139 (HPTQ). Residues N168, D232, and 236-237 (SM) each bind L-ornithine. Residues 273 to 274 (CL) and R318 each bind carbamoyl phosphate.

Belongs to the aspartate/ornithine carbamoyltransferase superfamily. OTCase family.

It is found in the cytoplasm. It carries out the reaction carbamoyl phosphate + L-ornithine = L-citrulline + phosphate + H(+). It participates in amino-acid degradation; L-arginine degradation via ADI pathway; carbamoyl phosphate from L-arginine: step 2/2. Its function is as follows. Reversibly catalyzes the transfer of the carbamoyl group from carbamoyl phosphate (CP) to the N(epsilon) atom of ornithine (ORN) to produce L-citrulline. In Streptococcus gordonii (strain Challis / ATCC 35105 / BCRC 15272 / CH1 / DL1 / V288), this protein is Ornithine carbamoyltransferase, catabolic.